A 116-amino-acid chain; its full sequence is Beta-D-galactosidase Rv1717 (116 aa).

Residues 40 to 107 (LSVYRPGGTA…TDRQALLLVT (68 aa)) form the Cupin type-2 domain.

The protein localises to the secreted. Its subcellular location is the cell wall. It carries out the reaction Hydrolysis of terminal non-reducing beta-D-galactose residues in beta-D-galactosides.. Its activity is regulated as follows. Beta-galactosidase activity is activated by Mg(2+) and significantly inhibited by Ca(2+), Cd(2+), Fe(2+), Ni(2+), Cu(2+) and Zn(2+). Inhibited by EDTA. Its function is as follows. Beta-D-galactopyranosidase that specifically recognizes the beta-glycosidic bonds formed with beta-D-galactopyranose (beta-D-Gal) or N-acetylgalactosamine (beta-D-GalNAc). May target the galactoside linkages in the exopolysaccharide component of the mycobacterial extracellular polymeric substance (EPS) and help dispersal of Mtb bacteria from a deteriorating biofilm. This chain is Beta-D-galactosidase Rv1717, found in Mycobacterium tuberculosis (strain ATCC 25618 / H37Rv).